We begin with the raw amino-acid sequence, 354 residues long: Galactose-1-phosphate uridylyltransferase (354 aa).

Residues 36-72 form a disordered region; sequence TVTTSEVRRDPLLGDSAPSRLAPQGRTYHPPADQCPL. Zn(2+)-binding residues include Cys70, Cys73, and His114. Asn154 contributes to the UDP-alpha-D-glucose binding site. Residue His165 coordinates Zn(2+). His167 (tele-UMP-histidine intermediate) is an active-site residue. UDP-alpha-D-glucose is bound by residues Gln169 and Gln332.

It belongs to the galactose-1-phosphate uridylyltransferase type 1 family. Zn(2+) is required as a cofactor.

The enzyme catalyses alpha-D-galactose 1-phosphate + UDP-alpha-D-glucose = alpha-D-glucose 1-phosphate + UDP-alpha-D-galactose. It functions in the pathway carbohydrate metabolism; galactose metabolism. This Streptomyces lividans protein is Galactose-1-phosphate uridylyltransferase (galT).